The sequence spans 229 residues: Cytidylate kinase (229 aa).

Residue 12-20 (GPSGSGKGT) participates in ATP binding.

This sequence belongs to the cytidylate kinase family. Type 1 subfamily.

It localises to the cytoplasm. It carries out the reaction CMP + ATP = CDP + ADP. It catalyses the reaction dCMP + ATP = dCDP + ADP. The protein is Cytidylate kinase of Pseudomonas fluorescens (strain ATCC BAA-477 / NRRL B-23932 / Pf-5).